A 264-amino-acid polypeptide reads, in one-letter code: MKQYIKLIKKIIRVGNQKKDRTGTGTLSIFGYNMKFDLKKGFPLLTTKKCHIASIIYELLWFLKGDTNISYLNENKISIWNNWANESGDVGPIYGKQWRNWSTPEGHEIDQIKNVLIQLKKNPDSRRMLVSSWNVGDIDKMRLPPCHVLFQFYVFNNTLSCQLYQRSCDVFLGLPFNIASYSILIHMIAQQCDLKVGDFLWTGGDVHLYNNHIELAKKQILRIPRTLPKLTILKKPQSLFQYCFEDFKIIGYHPYPAIKGEISI.

Arg21 lines the dUMP pocket. His51 is a (6R)-5,10-methylene-5,6,7,8-tetrahydrofolate binding site. 126-127 (RR) is a dUMP binding site. Cys146 serves as the catalytic Nucleophile. Residues 166–169 (RSCD), Asn177, and 207–209 (HLY) each bind dUMP. (6R)-5,10-methylene-5,6,7,8-tetrahydrofolate is bound at residue Asp169. Position 263 (Ser263) interacts with (6R)-5,10-methylene-5,6,7,8-tetrahydrofolate.

The protein belongs to the thymidylate synthase family. Bacterial-type ThyA subfamily. As to quaternary structure, homodimer.

It is found in the cytoplasm. The catalysed reaction is dUMP + (6R)-5,10-methylene-5,6,7,8-tetrahydrofolate = 7,8-dihydrofolate + dTMP. The protein operates within pyrimidine metabolism; dTTP biosynthesis. Its function is as follows. Catalyzes the reductive methylation of 2'-deoxyuridine-5'-monophosphate (dUMP) to 2'-deoxythymidine-5'-monophosphate (dTMP) while utilizing 5,10-methylenetetrahydrofolate (mTHF) as the methyl donor and reductant in the reaction, yielding dihydrofolate (DHF) as a by-product. This enzymatic reaction provides an intracellular de novo source of dTMP, an essential precursor for DNA biosynthesis. The polypeptide is Thymidylate synthase (Buchnera aphidicola subsp. Acyrthosiphon pisum (strain APS) (Acyrthosiphon pisum symbiotic bacterium)).